Here is a 196-residue protein sequence, read N- to C-terminus: Proteasome subunit beta 1 (196 aa).

A propeptide spans 1–6 (MEELPA) (removed in mature form; by autocatalysis). Residue Thr-7 is the Nucleophile of the active site.

The protein belongs to the peptidase T1B family. The 20S proteasome core is composed of 14 alpha and 14 beta subunits that assemble into four stacked heptameric rings, resulting in a barrel-shaped structure. The two inner rings, each composed of seven catalytic beta subunits, are sandwiched by two outer rings, each composed of seven alpha subunits. The catalytic chamber with the active sites is on the inside of the barrel. Has a gated structure, the ends of the cylinder being occluded by the N-termini of the alpha-subunits. Is capped at one or both ends by the proteasome regulatory ATPase, PAN.

The protein localises to the cytoplasm. The catalysed reaction is Cleavage of peptide bonds with very broad specificity.. The formation of the proteasomal ATPase PAN-20S proteasome complex, via the docking of the C-termini of PAN into the intersubunit pockets in the alpha-rings, triggers opening of the gate for substrate entry. Interconversion between the open-gate and close-gate conformations leads to a dynamic regulation of the 20S proteasome proteolysis activity. In terms of biological role, component of the proteasome core, a large protease complex with broad specificity involved in protein degradation. This is Proteasome subunit beta 1 from Saccharolobus islandicus (strain Y.N.15.51 / Yellowstone #2) (Sulfolobus islandicus).